Consider the following 699-residue polypeptide: Transcription factor MYC2 (699 aa).

Residues 25 to 60 are disordered; the sequence is PWGAASTPPPPPPPPHHHHQQQQQQVLPPPAAAPAA. The interval 93 to 158 is JAZ-interaction domain; sequence IDVSTGASLL…AAPDEAVEEE (66 aa). The tract at residues 290 to 530 is disordered; it reads DISVSKPPPP…EPLNHVEAER (241 aa). Polar residues predominate over residues 306–321; that stretch reads HFENGSTSTLTENPSP. Low complexity-rich tracts occupy residues 335–349 and 387–412; these read PQRQ…QAQQ and SSSG…PGSL. 2 stretches are compositionally biased toward polar residues: residues 413–449 and 459–472; these read FSQH…NNHP and SFSS…STGT. Basic and acidic residues predominate over residues 478–494; sequence SESDHSDLEASVREVES. A Nuclear localization signal motif is present at residues 506-514; sequence KRPRKRGRK. Residues 507–516 are compositionally biased toward basic residues; sequence RPRKRGRKPA. The segment covering 517 to 530 has biased composition (basic and acidic residues); that stretch reads NGREEPLNHVEAER. A basic motif; degenerate region spans residues 520–533; that stretch reads EEPLNHVEAERQRR. Positions 520–569 constitute a bHLH domain; it reads EEPLNHVEAERQRREKLNQRFYALRAVVPNVSKMDKASLLGDAISYINEL. The helix-loop-helix motif stretch occupies residues 534–569; it reads EKLNQRFYALRAVVPNVSKMDKASLLGDAISYINEL. The segment at 582–611 is disordered; the sequence is TLQSQMESLKKERDARPPAPSGGGGDGGAR.

It belongs to the bHLH protein family. Interacts with TIFY3/JAZ1. As to expression, highly expressed in spikelets and floral organs.

The protein localises to the nucleus. Its function is as follows. Transcriptional activator involved in jasmonate (JA) signaling pathway during spikelet development. Binds to the G2 region G-box (5'-CACGTG-3') of the MADS1 promoter and thus directly regulates the expression of MADS1. Its function in MADS1 activation is abolished by TIFY3/JAZ1 which directly target MYC2 during spikelet development. The polypeptide is Transcription factor MYC2 (Oryza sativa subsp. japonica (Rice)).